The following is a 380-amino-acid chain: Chorismate synthase (380 aa).

2 residues coordinate NADP(+): Arg-40 and Arg-46. FMN is bound by residues 128–130, 247–248, Gly-292, 307–311, and Arg-333; these read RSS, QA, and KPIPT.

The protein belongs to the chorismate synthase family. In terms of assembly, homotetramer. FMNH2 serves as cofactor.

The enzyme catalyses 5-O-(1-carboxyvinyl)-3-phosphoshikimate = chorismate + phosphate. It functions in the pathway metabolic intermediate biosynthesis; chorismate biosynthesis; chorismate from D-erythrose 4-phosphate and phosphoenolpyruvate: step 7/7. Functionally, catalyzes the anti-1,4-elimination of the C-3 phosphate and the C-6 proR hydrogen from 5-enolpyruvylshikimate-3-phosphate (EPSP) to yield chorismate, which is the branch point compound that serves as the starting substrate for the three terminal pathways of aromatic amino acid biosynthesis. This reaction introduces a second double bond into the aromatic ring system. The protein is Chorismate synthase of Alkaliphilus metalliredigens (strain QYMF).